The following is a 99-amino-acid chain: UPF0235 protein Sbal_3028 (99 aa).

The protein belongs to the UPF0235 family.

The protein is UPF0235 protein Sbal_3028 of Shewanella baltica (strain OS155 / ATCC BAA-1091).